The chain runs to 1375 residues: DNA-directed RNA polymerase subunit beta (1375 aa).

It belongs to the RNA polymerase beta chain family. In terms of assembly, the RNAP catalytic core consists of 2 alpha, 1 beta, 1 beta' and 1 omega subunit. When a sigma factor is associated with the core the holoenzyme is formed, which can initiate transcription.

The enzyme catalyses RNA(n) + a ribonucleoside 5'-triphosphate = RNA(n+1) + diphosphate. DNA-dependent RNA polymerase catalyzes the transcription of DNA into RNA using the four ribonucleoside triphosphates as substrates. This chain is DNA-directed RNA polymerase subunit beta, found in Coxiella burnetii (strain Dugway 5J108-111).